Consider the following 72-residue polypeptide: Small proline-rich protein 2A (72 aa).

Residues 1–11 (MSYQQQQCKQP) show a composition bias toward low complexity. A disordered region spans residues 1-20 (MSYQQQQCKQPCQPPPVCPT). A run of 3 repeats spans residues 21–29 (PKCPEPCPP), 30–38 (PKCPEPCPP), and 39–47 (PKCPQPCPP). The tract at residues 21-47 (PKCPEPCPPPKCPEPCPPPKCPQPCPP) is 3 X 9 AA tandem repeats of P-K-C-P-[EQ]-P-C-P-P. The segment at 42 to 72 (PQPCPPQQCQQKYPPVTPSPPCQSKYPPKSK) is disordered.

It belongs to the cornifin (SPRR) family. In terms of processing, forms five pairs of intrachain disulfide bonds. As to expression, expressed in intestine; selectively expressed in goblet cells.

Its subcellular location is the secreted. The protein resides in the extracellular space. It localises to the cytoplasmic vesicle. It is found in the secretory vesicle. Gut bactericidal protein that selectively kills Gram-positive bacteria by binding to negatively charged lipids on bacterial membranes, leading to bacterial membrane permeabilization and disruption. Specifically binds lipids bearing negatively charged headgroups, such as phosphatidic acid, phosphatidylserine (PS), cardiolipin (CL), and phosphatidylinositol phosphates, but not to zwitterionic or neutral lipids. Induced by type-2 cytokines in response to helminth infection and is required to protect against helminth-induced bacterial invasion of intestinal tissue. May also be involved in the development of the cornified envelope of squamous epithelia; however, additional evidences are required to confirm this result in vivo. This chain is Small proline-rich protein 2A, found in Homo sapiens (Human).